Consider the following 495-residue polypeptide: Cytochrome P450 Tp4149 (495 aa).

2 helical membrane-spanning segments follow: residues 4–24 (ILSL…MFFI) and 208–228 (YLSM…SWVD). A glycan (N-linked (GlcNAc...) asparagine) is linked at Asn-419. Position 437 (Cys-437) interacts with heme.

Belongs to the cytochrome P450 family. It depends on heme as a cofactor.

It localises to the membrane. Its pathway is secondary metabolite biosynthesis; terpenoid biosynthesis. Its function is as follows. Probably involved in the biosynthesis of germacrene-derived sesquiterpene lactones. The polypeptide is Cytochrome P450 Tp4149 (Tanacetum parthenium (Feverfew)).